The sequence spans 295 residues: Phosphoribosylaminoimidazole-succinocarboxamide synthase (295 aa).

The protein belongs to the SAICAR synthetase family.

The enzyme catalyses 5-amino-1-(5-phospho-D-ribosyl)imidazole-4-carboxylate + L-aspartate + ATP = (2S)-2-[5-amino-1-(5-phospho-beta-D-ribosyl)imidazole-4-carboxamido]succinate + ADP + phosphate + 2 H(+). It participates in purine metabolism; IMP biosynthesis via de novo pathway; 5-amino-1-(5-phospho-D-ribosyl)imidazole-4-carboxamide from 5-amino-1-(5-phospho-D-ribosyl)imidazole-4-carboxylate: step 1/2. The sequence is that of Phosphoribosylaminoimidazole-succinocarboxamide synthase from Halorhodospira halophila (strain DSM 244 / SL1) (Ectothiorhodospira halophila (strain DSM 244 / SL1)).